The chain runs to 282 residues: Bis(5'-nucleosyl)-tetraphosphatase, symmetrical (282 aa).

The protein belongs to the Ap4A hydrolase family. Monomer.

The enzyme catalyses P(1),P(4)-bis(5'-adenosyl) tetraphosphate + H2O = 2 ADP + 2 H(+). Functionally, hydrolyzes diadenosine 5',5'''-P1,P4-tetraphosphate to yield ADP. This Escherichia coli O157:H7 protein is Bis(5'-nucleosyl)-tetraphosphatase, symmetrical.